The following is a 353-amino-acid chain: Keratocan (353 aa).

The first 21 residues, 1 to 21 (MMTLKVCPSLLLLFLVHSVWT), serve as a signal peptide directing secretion. Positions 34 to 72 (EHWSHYTFECPQECFCPPSFPNALYCDNKGLKEIPAIPA) constitute an LRRNT domain. Cystine bridges form between C43–C49 and C47–C59. 8 LRR repeats span residues 73 to 94 (RIWYLYLQNNLIETISEKPFVN), 97 to 118 (HLRWINLNKNKITNNGIESGVL), 123 to 143 (RLLYLFLEDNELEEVPAPLPV), 144 to 165 (GLEQLRLARNKISRIPEGVFSN), 168 to 188 (NLTMLDLHQNNLLDSALQSDT), 194 to 214 (SLMQLNIAKNSLKKMPLSIPA), 215 to 236 (NTLQLFLDNNSIEVIPENYFSA), and 239 to 259 (KVTFLRLNYNKLSDEGIPPNG). N-linked (GlcNAc...) (keratan sulfate) asparagine glycosylation is present at N94. The N-linked (GlcNAc...) asparagine glycan is linked to N168. N223 carries N-linked (GlcNAc...) (keratan sulfate) asparagine glycosylation. N-linked (GlcNAc...) (keratan sulfate) asparagine glycosylation is present at N261. LRR repeat units lie at residues 264 to 283 (SILDLQLSHNQLTKIPPINA) and 284 to 305 (HLEHLHLDHNRIKSVNGTQICP). An N-linked (GlcNAc...) asparagine glycan is attached at N299. Residues C304 and C344 are joined by a disulfide bond.

The protein belongs to the small leucine-rich proteoglycan (SLRP) family. SLRP class II subfamily. As to expression, cornea.

The protein resides in the secreted. Its subcellular location is the extracellular space. The protein localises to the extracellular matrix. Plays an important role in generating and maintaining a transparent matrix within the corneal stroma. The protein is Keratocan (KERA) of Coturnix japonica (Japanese quail).